The sequence spans 233 residues: MADGYWNQQRQQHHPPGGPMKRPRSDFEAPSSTMTIGHGGGYYPRDEDLDVPDTRTIGSAYDRYLQSVQSGEGGSVSMGRSGGGGGGGGGNVQTIDDFMLRRGGVLPLDHGPNGHTIGFDPPEPVGRRNLPSDASNTLYVEGLPSNCSRREVAHIFRPFVGYREVRLVTKDSKHRNGDPIVLCFVDFTNPACAATALSALQGYRMDENESDSKFLRLQFSRKPGSRPGQRGRR.

Disordered stretches follow at residues 1–54 (MADG…VPDT), 68–92 (VQSG…GGNV), and 214–233 (FLRL…RGRR). Gly residues predominate over residues 71-91 (GEGGSVSMGRSGGGGGGGGGN). In terms of domain architecture, RRM spans 136–222 (NTLYVEGLPS…KFLRLQFSRK (87 aa)).

As to expression, expressed in root meristems, lateral root primordia and root vascular tissues.

It is found in the nucleus speckle. In terms of biological role, alternative splicing (AS) regulator that binds to specific mRNAs and modulates auxin effects on the transcriptome. Displaced from its targets upon binding to AS competitor long non-coding RNA (ASCO-RNA). This chain is Nuclear speckle RNA-binding protein A, found in Arabidopsis thaliana (Mouse-ear cress).